The sequence spans 101 residues: Putative septation protein SpoVG (101 aa).

It belongs to the SpoVG family.

Functionally, could be involved in septation. The sequence is that of Putative septation protein SpoVG from Staphylococcus saprophyticus subsp. saprophyticus (strain ATCC 15305 / DSM 20229 / NCIMB 8711 / NCTC 7292 / S-41).